Here is a 1449-residue protein sequence, read N- to C-terminus: ABC transporter G family member 21 (1449 aa).

The segment covering 1 to 10 (MEEYELREIA) has biased composition (basic and acidic residues). Positions 1–49 (MEEYELREIALQEGGSNLDINTPPNYDNPVGDGSSPPDSPDIQKSENQF) are disordered. A compositionally biased stretch (polar residues) spans 14–25 (GGSNLDINTPPN). The ABC transporter 1 domain occupies 130 to 383 (ISFFNLFKPS…FIDLGFDCEP (254 aa)). Residues 488-731 (WGDKFSLISR…ILSVEGKDYL (244 aa)) enclose the ABC transmembrane type-2 1 domain. 5 helical membrane-spanning segments follow: residues 519–539 (IPGL…NAFL), 577–597 (IPLT…MFGL), 602–622 (GKFF…TNLF), 634–654 (ISQN…GYTI), and 747–767 (FITY…MEYF). The ABC transporter 2 domain maps to 818–1062 (FTWQNINYTV…LTSYFERYGV (245 aa)). 854-861 (GSSGAGKT) provides a ligand contact to ATP. An ABC transmembrane type-2 2 domain is found at 1152–1386 (FYTYGSFIQS…PISEPLTGYV (235 aa)). The next 6 helical transmembrane spans lie at 1155-1175 (YGSF…FWSL), 1188-1208 (FIFE…PQFI), 1228-1248 (FAIS…TIFF), 1266-1286 (FYFW…GQAV), 1296-1316 (AHTL…VMVI), and 1423-1443 (LALI…FVYI).

It belongs to the ABC transporter superfamily. ABCG family. PDR (TC 3.A.1.205) subfamily.

Its subcellular location is the membrane. This is ABC transporter G family member 21 (abcG21) from Dictyostelium discoideum (Social amoeba).